The sequence spans 536 residues: MATASVSFKSREDHRKQLELEEARKAGLAPAEVDEDGKEINPHIPQYMSSAPWYLNADKPSLKHQRNWKSDPNYTKSWYDRGAKLFQANKYRKGACENCGAMTHDKKSCMERPRSVGAKWTNINIAPDEKVESFELDYDGKRDRWNGYDPSTYTRVIADYEAREEARKKYLKEQQLKKLEEKDGEEGDENVASEEEDEEDGLKIDEAKVDESAQMDFAKVEKRVRTTGGGSTGTVRNLRIREDTAKYLLNLDVNSAYYDPKTRSMREDPLPDADPNDKFYVGDNQNRLSGQALEFKQLNIHAWEAFDKGQDIHMQAAPSQAELLFKSFKIKKEKLKSENKDKIMEKYGNAASEEPIPRELLLGQSEKEIEYDRTGRIIKGQDVALPKSKYEEDVFINNHTTVWGSWWKDHQWGYKCCKQTIRNSYCTGLAGIEAAEASADLMKANMARKEAAEDEPVRHEEKRLATWGTDVPNDIVLDKKLLDEALKKEGARRKEEMDERKRKYNVKWNDEVTAEDMEAYRMKRIHHDDPMRDFLH.

The segment at 22-42 (EARKAGLAPAEVDEDGKEINP) is disordered. Residues 94–111 (GACENCGAMTHDKKSCME) form a CCHC-type zinc finger. Residues 178–201 (KLEEKDGEEGDENVASEEEDEEDG) are disordered. The segment covering 182 to 200 (KDGEEGDENVASEEEDEED) has biased composition (acidic residues).

Belongs to the SLU7 family.

The protein resides in the nucleus. In terms of biological role, participates in the second catalytic step of pre-mRNA splicing, when the free hydroxyl group of exon I attacks the 3'-splice site to generate spliced mRNA and the excised lariat intron. This Oryza sativa subsp. indica (Rice) protein is Pre-mRNA-splicing factor SLU7.